The sequence spans 312 residues: Ribosomal protein L11 methyltransferase (312 aa).

S-adenosyl-L-methionine-binding residues include Thr160, Gly181, Asp203, and Asn246.

Belongs to the methyltransferase superfamily. PrmA family.

It localises to the cytoplasm. It carries out the reaction L-lysyl-[protein] + 3 S-adenosyl-L-methionine = N(6),N(6),N(6)-trimethyl-L-lysyl-[protein] + 3 S-adenosyl-L-homocysteine + 3 H(+). Its function is as follows. Methylates ribosomal protein L11. The polypeptide is Ribosomal protein L11 methyltransferase (Staphylococcus haemolyticus (strain JCSC1435)).